Reading from the N-terminus, the 81-residue chain is uncharacterized protein (81 aa).

2 consecutive transmembrane segments (helical) span residues 27-47 and 54-74; these read ASLL…LNLT and IFGA…IFIM.

The protein localises to the cell membrane. This is an uncharacterized protein from Bacillus subtilis (strain 168).